Here is a 753-residue protein sequence, read N- to C-terminus: Neuroendocrine convertase 1 (753 aa).

The first 27 residues, 1–27 (MGRRAWTLQCTAFSLFCAWCAMNSVKA), serve as a signal peptide directing secretion. A propeptide spanning residues 28–110 (KKQFVNEWAA…QQYEKERSKR (83 aa)) is cleaved from the precursor. The 322-residue stretch at 129–450 (QWYLQDTRMT…FGLLNAKALV (322 aa)) folds into the Peptidase S8 domain. Aspartate 167 serves as the catalytic Charge relay system. Residue asparagine 173 is glycosylated (N-linked (GlcNAc...) asparagine). Histidine 208 serves as the catalytic Charge relay system. 2 cysteine pairs are disulfide-bonded: cysteine 225–cysteine 374 and cysteine 317–cysteine 347. Serine 382 functions as the Charge relay system in the catalytic mechanism. Asparagine 401 is a glycosylation site (N-linked (GlcNAc...) asparagine). The 138-residue stretch at 460 to 597 (SVPEKKECVV…KLILHGTSSQ (138 aa)) folds into the P/Homo B domain. A disulfide bridge links cysteine 467 with cysteine 494. 2 disordered regions span residues 617–657 (RRGV…RRDE) and 676–695 (SKNS…KPNI).

Belongs to the peptidase S8 family. Furin subfamily. The cofactor is Ca(2+).

The protein resides in the cytoplasmic vesicle. It is found in the secretory vesicle. The catalysed reaction is Release of protein hormones, neuropeptides and renin from their precursors, generally by hydrolysis of -Lys-Arg-|- bonds.. In terms of biological role, involved in the processing of hormone and other protein precursors at sites comprised of pairs of basic amino acid residues. Substrates include POMC, renin, enkephalin, dynorphin, somatostatin, insulin and AGRP. This Bos taurus (Bovine) protein is Neuroendocrine convertase 1 (PCSK1).